A 207-amino-acid chain; its full sequence is GTP-binding protein RHO1 (207 aa).

18 to 25 (GDGACGKT) contributes to the GTP binding site. Positions 40–48 (YVPTVFDNY) match the Effector region motif. GTP-binding positions include 65–69 (DTAGQ) and 123–126 (CKAD). Residues 187–207 (GKQGKSKAKSDKKKKKKCVVL) form a disordered region. Positions 190 to 207 (GKSKAKSDKKKKKKCVVL) are enriched in basic residues. The residue at position 204 (Cys204) is a Cysteine methyl ester. A lipid anchor (S-geranylgeranyl cysteine) is attached at Cys204. Residues 205 to 207 (VVL) constitute a propeptide, removed in mature form.

Belongs to the small GTPase superfamily. Rho family.

It is found in the cell membrane. Functionally, involved in the regulation of actin polarization. Rho proteins are required for distinct steps during polarized hyphal growth of A.gossypii. This is GTP-binding protein RHO1 (RHO1) from Eremothecium gossypii (strain ATCC 10895 / CBS 109.51 / FGSC 9923 / NRRL Y-1056) (Yeast).